The primary structure comprises 212 residues: ATP-dependent dethiobiotin synthetase BioD (212 aa).

Residue 13 to 18 (GVGKTV) participates in ATP binding. Mg(2+) is bound at residue threonine 17. Residue lysine 33 is part of the active site. Residue glutamate 100 participates in Mg(2+) binding. ATP is bound by residues 100–103 (EGAG) and 184–186 (PHL).

It belongs to the dethiobiotin synthetase family. Homodimer. Requires Mg(2+) as cofactor.

The protein localises to the cytoplasm. The enzyme catalyses (7R,8S)-7,8-diammoniononanoate + CO2 + ATP = (4R,5S)-dethiobiotin + ADP + phosphate + 3 H(+). Its pathway is cofactor biosynthesis; biotin biosynthesis; biotin from 7,8-diaminononanoate: step 1/2. Its function is as follows. Catalyzes a mechanistically unusual reaction, the ATP-dependent insertion of CO2 between the N7 and N8 nitrogen atoms of 7,8-diaminopelargonic acid (DAPA, also called 7,8-diammoniononanoate) to form a ureido ring. This is ATP-dependent dethiobiotin synthetase BioD from Rhodopseudomonas palustris (strain BisB5).